The primary structure comprises 2364 residues: MTTTVATDYDNIEIQQQYSDVNNRWDVDDWDNENSSARLFERSRIKALADEREAVQKKTFTKWVNSHLARVSCRITDLYTDLRDGRMLIKLLEVLSGERLPKPTKGRMRIHCLENVDKALQFLKEQRVHLENMGSHDIVDGNHRLTLGLIWTIILRFQIQDISVETEDNKEKKSAKDALLLWCQMKTAGYPNVNIHNFTTSWRDGMAFNALIHKHRPDLIDFDKLKKSNAHYNLQNAFNLAEQHLGLTKLLDPEDISVDHPDEKSIITYVVTYYHYFSKMKALAVEGKRIGKVLDNAIETEKMIEKYESLASDLLEWIEQTIIILNNRKFANSLVGVQQQLQAFNTYRTVEKPPKFTEKGNLEVLLFTIQSKMRANNQKVYMPREGKLISDINKAWERLEKAEHERELALRNELIRQEKLEQLARRFDRKAAMRETWLSENQRLVSQDNFGFDLPAVEAATKKHEAIETDIAAYEERVQAVVAVARELEAENYHDIKRITARKDNVIRLWEYLLELLRARRQRLEMNLGLQKIFQEMLYIMDWMDEMKVLVLSQDYGKHLLGVEDLLQKHTLVEADIGIQAERVRGVNASAQKFATDGEGYKPCDPQVIRDRVAHMEFCYQELCQLAAERRARLEESRRLWKFFWEMAEEEGWIREKEKILSSDDYGKDLTSVMRLLSKHRAFEDEMSGRSGHFEQAIKEGEDMIAEEHFGSEKIRERIIYIREQWANLEQLSAIRKKRLEEASLLHQFQADADDIDAWMLDILKIVSSSDVGHDEYSTQSLVKKHKDVAEEIANYRPTLDTLHEQASALPQEHAESPDVRGRLSGIEERYKEVAELTRLRKQALQDTLALYKMFSEADACELWIDEKEQWLNNMQIPEKLEDLEVIQHRFESLEPEMNNQASRVAVVNQIARQLMHSGHPSEKEIKAQQDKLNTRWSQFRELVDRKKDALLSALSIQNYHLECNETKSWIREKTKVIESTQDLGNDLAGVMALQRKLTGMERDLVAIEAKLSDLQKEAEKLESEHPDQAQAILSRLAEISDVWEEMKTTLKNREASLGEASKLQQFLRDLDDFQSWLSRTQTAIASEDMPNTLTEAEKLLTQHENIKNEIDNYEEDYQKMRDMGEMVTQGQTDAQYMFLRQRLQALDTGWNELHKMWENRQNLLSQSHAYQQFLRDTKQAEAFLNNQEYVLAHTEMPTTLEGAEAAIKKQEDFMTTMDANEEKINAVVETGRRLVSDGNINSDRIQEKVDSIDDRHRKNRETASELLMRLKDNRDLQKFLQDCQELSLWINEKMLTAQDMSYDEARNLHSKWLKHQAFMAELASNKEWLDKIEKEGMQLISEKPETEAVVKEKLTGLHKMWEVLESTTQTKAQRLFDANKAELFTQSCADLDKWLHGLESQIQSDDYGKDLTSVNILLKKQQMLENQMEVRKKEIEELQSQAQALSQEGKSTDEVDSKRLTVQTKFMELLEPLNERKHNLLASKEIHQFNRDVEDEILWVGERMPLATSTDHGHNLQTVQLLIKKNQTLQKEIQGHQPRIDDIFERSQNIVTDSSSLSAEAIRQRLADLKQLWGLLIEETEKRHRRLEEAHRAQQYYFDAAEAEAWMSEQELYMMSEEKAKDEQSAVSMLKKHQILEQAVEDYAETVHQLSKTSRALVADSHPESERISMRQSKVDKLYAGLKDLAEERRGKLDERHRLFQLNREVDDLEQWIAEREVVAGSHELGQDYEHVTMLQERFREFARDTGNIGQERVDTVNHLADELINSGHSDAATIAEWKDGLNEAWADLLELIDTRTQILAASYELHKFYHDAKEIFGRIQDKHKKLPEELGRDQNTVETLQRMHTTFEHDIQALGTQVRQLQEDAARLQAAYAGDKADDIQKRENEVLEAWKSLLDACESRRVRLVDTGDKFRFFSMVRDLMLWMEDVIRQIEAQEKPRDVSSVELLMNNHQGIKAEIDARNDSFTTCIELGKSLLARKHYASEEIKEKLLQLTEKRKEMIDKWEDRWEWLRLILEVHQFSRDASVAEAWLLGQEPYLSSREIGQSVDEVEKLIKRHEAFEKSAATWDERFSALERLTTLELLEVRRQQEEEERKRRPPSPEPSTKVSEEAESQQQWDTSKGEQVSQNGLPAEQGSPRMAETVDTSEMVNGATEQRTSSKESSPIPSPTSDRKAKTALPAQSAATLPARTQETPSAQMEGFLNRKHEWEAHNKKASSRSWHNVYCVINNQEMGFYKDAKTAASGIPYHSEVPVSLKEAVCEVALDYKKKKHVFKLRLNDGNEYLFQAKDDEEMNTWIQAISSAISSDKHEVSASTQSTPASSRAQTLPTSVVTITSESSPGKREKDKEKDKEKRFSLFGKKK.

Thr2 carries the N-acetylthreonine modification. The segment at 2–275 is actin-binding; it reads TTTVATDYDN…IITYVVTYYH (274 aa). A phosphoserine mark is found at Ile14 and Ser36. Calponin-homology (CH) domains lie at 54-158 and 173-278; these read AVQK…LRFQ and KSAK…HYFS. N6-acetyllysine is present on Lys90. The residue at position 228 (Ser228) is a Phosphoserine. Spectrin repeat units follow at residues 303 to 411, 423 to 525, 530 to 636, 639 to 742, 745 to 847, 850 to 952, 957 to 1060, 1063 to 1166, 1170 to 1258, 1276 to 1376, 1381 to 1482, 1486 to 1590, 1592 to 1696, 1698 to 1801, and 1805 to 1907; these read MIEK…LALR, LARR…QRLE, LQKI…RLEE, RLWK…RLEE, LLHQ…ALQD, ALYK…DALL, IQNY…SLGE, KLQQ…NLLS, AYQQ…DRHR, DLQK…AQRL, KAEL…HNLL, EIHQ…RLEE, HRAQ…KLDE, HRLF…TQIL, and YELH…RVRL. Ser817, Ser825, Ser903, Ser1057, Ser1076, Ser1079, and Ser1237 each carry phosphoserine. Ser1388, Ser1447, and Ser1557 each carry phosphoserine. Residues 1563–2093 are interaction with ANK2; the sequence is IRQRLADLKQ…LLEVRRQQEE (531 aa). A Phosphotyrosine modification is found at Tyr1805. An N6-acetyllysine mark is found at Lys1815, Lys1913, and Lys1989. Spectrin repeat units follow at residues 1914-2014 and 2018-2097; these read FRFF…EWLR and EVHQ…EERK. A disordered region spans residues 2089–2196; the sequence is RQQEEEERKR…TLPARTQETP (108 aa). A phosphoserine mark is found at Ser2102, Ser2128, and Ser2138. Residues 2115 to 2131 are compositionally biased toward polar residues; that stretch reads SQQQWDTSKGEQVSQNG. Residues 2145–2166 show a composition bias toward polar residues; the sequence is VDTSEMVNGATEQRTSSKESSP. Residue Thr2147 is modified to Phosphothreonine. Residue Ser2148 is modified to Phosphoserine. The segment at 2149-2177 is mediates interaction with CAMSAP1; that stretch reads EMVNGATEQRTSSKESSPIPSPTSDRKAK. Thr2159 carries the post-translational modification Phosphothreonine. Phosphoserine is present on residues Ser2160, Ser2161, Ser2164, Ser2165, and Ser2169. Position 2171 is a phosphothreonine (Thr2171). A phosphoserine mark is found at Ser2172 and Ser2184. The segment covering 2184 to 2196 has biased composition (polar residues); it reads SAATLPARTQETP. Phosphothreonine is present on residues Thr2187 and Thr2195. Residues 2197-2307 form the PH domain; the sequence is SAQMEGFLNR…WIQAISSAIS (111 aa). Residues 2309–2364 form a disordered region; it reads DKHEVSASTQSTPASSRAQTLPTSVVTITSESSPGKREKDKEKDKEKRFSLFGKKK. Phosphoserine is present on residues Ser2314 and Ser2319. Positions 2314 to 2341 are enriched in polar residues; sequence SASTQSTPASSRAQTLPTSVVTITSESS. Thr2320 carries the phosphothreonine modification. O-linked (GlcNAc) serine glycosylation occurs at Ser2324. Phosphothreonine is present on Thr2328. Ser2340 and Ser2341 each carry phosphoserine. Positions 2342-2357 are enriched in basic and acidic residues; sequence PGKREKDKEKDKEKRF.

This sequence belongs to the spectrin family. In terms of assembly, interacts with CAMSAP1. Interacts with ANK2. Interacts with CPNE4 (via VWFA domain). Like erythrocyte spectrin, the spectrin-like proteins are capable to form dimers which can further associate to tetramers. Can form heterodimers with SPTAN1. Isoform Short cannot bind to the axonal protein fodaxin. Isoform 2 is present in brain, lung and kidney (at protein level).

It is found in the cytoplasm. It localises to the cytoskeleton. Its subcellular location is the myofibril. The protein localises to the sarcomere. The protein resides in the m line. It is found in the cytosol. It localises to the cell membrane. In terms of biological role, fodrin, which seems to be involved in secretion, interacts with calmodulin in a calcium-dependent manner and is thus candidate for the calcium-dependent movement of the cytoskeleton at the membrane. Plays a critical role in central nervous system development and function. The sequence is that of Spectrin beta chain, non-erythrocytic 1 (SPTBN1) from Homo sapiens (Human).